The chain runs to 323 residues: THO complex subunit 6 homolog (323 aa).

WD repeat units follow at residues 6–45, 58–96, 108–147, 150–189, 200–238, and 279–321; these read LLHM…SPDA, AHDG…STKA, LEIP…FKSV, GHTD…PVHC, RPQF…PTSV, and CSPS…ALSL.

This sequence belongs to the WD repeat THOC6 family. As to quaternary structure, component of the THO subcomplex, which is composed of thoc1, thoc2, thoc3, thoc5, thoc6 and thoc7. Component of the transcription/export (TREX) complex at least composed of alyref/thoc4, ddx39b, sarnp/cip29, chtop and the THO subcomplex.

It is found in the nucleus. The protein resides in the nucleus speckle. Component of the THO subcomplex of the TREX complex which is thought to couple mRNA transcription, processing and nuclear export, and which specifically associates with spliced mRNA and not with unspliced pre-mRNA. Plays a key structural role in the oligomerization of the THO-DDX39B complex. TREX is recruited to spliced mRNAs by a transcription-independent mechanism, binds to mRNA upstream of the exon-junction complex (EJC) and is recruited in a splicing- and cap-dependent manner to a region near the 5' end of the mRNA where it functions in mRNA export to the cytoplasm via the TAP/NXF1 pathway. Plays a role in apoptosis negative control involved in brain development. The sequence is that of THO complex subunit 6 homolog (thoc6) from Danio rerio (Zebrafish).